Reading from the N-terminus, the 639-residue chain is 1-deoxy-D-xylulose-5-phosphate synthase (639 aa).

Thiamine diphosphate contacts are provided by residues histidine 79 and 120–122 (GHS). Aspartate 151 lines the Mg(2+) pocket. Thiamine diphosphate is bound by residues 152–153 (GS), asparagine 180, tyrosine 289, and glutamate 371. A Mg(2+)-binding site is contributed by asparagine 180.

Belongs to the transketolase family. DXPS subfamily. In terms of assembly, homodimer. It depends on Mg(2+) as a cofactor. Thiamine diphosphate is required as a cofactor.

The enzyme catalyses D-glyceraldehyde 3-phosphate + pyruvate + H(+) = 1-deoxy-D-xylulose 5-phosphate + CO2. It functions in the pathway metabolic intermediate biosynthesis; 1-deoxy-D-xylulose 5-phosphate biosynthesis; 1-deoxy-D-xylulose 5-phosphate from D-glyceraldehyde 3-phosphate and pyruvate: step 1/1. Functionally, catalyzes the acyloin condensation reaction between C atoms 2 and 3 of pyruvate and glyceraldehyde 3-phosphate to yield 1-deoxy-D-xylulose-5-phosphate (DXP). This Agrobacterium fabrum (strain C58 / ATCC 33970) (Agrobacterium tumefaciens (strain C58)) protein is 1-deoxy-D-xylulose-5-phosphate synthase.